A 428-amino-acid chain; its full sequence is Serine--tRNA ligase (428 aa).

236-238 (TAE) is an L-serine binding site. 267 to 269 (RSE) provides a ligand contact to ATP. Position 290 (Glu-290) interacts with L-serine. ATP is bound at residue 354–357 (EISS). Ser-388 is a binding site for L-serine.

This sequence belongs to the class-II aminoacyl-tRNA synthetase family. Type-1 seryl-tRNA synthetase subfamily. As to quaternary structure, homodimer. The tRNA molecule binds across the dimer.

It localises to the cytoplasm. The catalysed reaction is tRNA(Ser) + L-serine + ATP = L-seryl-tRNA(Ser) + AMP + diphosphate + H(+). It carries out the reaction tRNA(Sec) + L-serine + ATP = L-seryl-tRNA(Sec) + AMP + diphosphate + H(+). Its pathway is aminoacyl-tRNA biosynthesis; selenocysteinyl-tRNA(Sec) biosynthesis; L-seryl-tRNA(Sec) from L-serine and tRNA(Sec): step 1/1. Its function is as follows. Catalyzes the attachment of serine to tRNA(Ser). Is also able to aminoacylate tRNA(Sec) with serine, to form the misacylated tRNA L-seryl-tRNA(Sec), which will be further converted into selenocysteinyl-tRNA(Sec). This is Serine--tRNA ligase from Psychrobacter sp. (strain PRwf-1).